The primary structure comprises 423 residues: MEKNNSAKRGQQDGNQQSAQPEKVGWVRKFCGKGIFREIWKNRYVVLKGDQLYISEKEVKDEKNVQEAFDLSDYEKCEELRKSKSRSKKNHSKFTLAHSRQPGNMAPNLIFLAVSPEEKESWINALNSAITRAKNRILDEVTVEEDSYLAHPTRDRAKIQHSRRPPTRGHLMAVASTSTSDGMLTLDLIQEEDASPEEHSTCEESFRVDLDKSVAQLAAGRRRSDSENVKLSEKGRSGTLPRHEVTSWDKPTQRKDSLDKGTVYTPQVPKKLSHSEKNKCASMEEILSRRDSAHRAVLRRGLEAHCTAAEPEQLSRLQELVALKLEKTQELLTEVKGYGEGKRKVKDCATSTTTSSSSSSSRSDCERILQESERLLGEASSTWSQARRVLQEVRELRDLYRQIELQQVDCNPKQSSQYRKSMM.

3 disordered regions span residues 1 to 21 (MEKN…SAQP), 81 to 100 (RKSK…AHSR), and 217 to 277 (LAAG…HSEK). The span at 7 to 20 (AKRGQQDGNQQSAQ) shows a compositional bias: polar residues. Residues 20–131 (QPEKVGWVRK…WINALNSAIT (112 aa)) enclose the PH domain. Basic residues predominate over residues 83 to 92 (SKSRSKKNHS). Basic and acidic residues predominate over residues 222–259 (RRSDSENVKLSEKGRSGTLPRHEVTSWDKPTQRKDSLD).

Post-translationally, C-terminal fragments could be released during apoptosis via caspase-3-dependent cleavage.

It localises to the membrane. It is found in the nucleus. Its subcellular location is the cytoplasm. In terms of biological role, plays a role in the regulation of the actin cytoskeleton through its interactions with actin capping protein (CP). The polypeptide is Pleckstrin homology domain-containing family O member 1 (PLEKHO1) (Gallus gallus (Chicken)).